Consider the following 455-residue polypeptide: MAGIPDHIQDQHLVEEDQPFDLEDWLPITASRNANWYYSAFHNVTAIVGAGVLGLPYAMSELGWGPGVVVLILSWVITLYTLWQMIEMHEMFEGQRFDRYHELGQAAFGKKLGLYIIVPLQLLVEISVCIVYMVTGGKSLKNVHDLALGDGDKCTKLRIQHFILIFASSQFVLSLLKNFNSISGVSLVAAVMSVSYSTIAWVASLRKGATTGSVEYGYRKRTTSVPLAFLSALGEMAFAYAGHNVVLEIQATIPSTPENPSKRPMWKGAVVAYIIVAFCYFPVALVGFKTFGNSVEESILESLTKPTALVIVANMFVVIHLLGSYQVYAMPVFDMIESVMIRIWHFSPTRVLRFTIRWTFVAATMGIAVGLPYYSALLSFFGGFVFAPTTYFIPCIMWLILKKPKRFSLSWCMNWFCIIFGLVLMIIAPIGGLAKLIYNIQKGTLPNSRCNLPKH.

The Cytoplasmic portion of the chain corresponds to M1–Y38. Residues S39–M59 form a helical membrane-spanning segment. The Extracellular portion of the chain corresponds to S60–E61. A helical membrane pass occupies residues L62–L82. The Cytoplasmic segment spans residues W83–G113. A helical transmembrane segment spans residues L114 to V134. At T135–R158 the chain is on the extracellular side. The helical transmembrane segment at I159 to F179 threads the bilayer. Topologically, residues N180 to S181 are cytoplasmic. Residues I182–V202 form a helical membrane-spanning segment. At A203–P226 the chain is on the extracellular side. The helical transmembrane segment at L227–L247 threads the bilayer. The Cytoplasmic segment spans residues E248–K267. Residues G268–F288 traverse the membrane as a helical segment. At K289–T307 the chain is on the extracellular side. The chain crosses the membrane as a helical span at residues A308–Y328. The Cytoplasmic portion of the chain corresponds to A329–R357. The chain crosses the membrane as a helical span at residues W358–L378. S379 is a topological domain (extracellular). The helical transmembrane segment at F380–I400 threads the bilayer. The Cytoplasmic portion of the chain corresponds to L401 to C412. The helical transmembrane segment at M413–L433 threads the bilayer. The Extracellular portion of the chain corresponds to A434 to H455.

Belongs to the amino acid/polyamine transporter 2 family. Amino acid/auxin permease (AAAP) (TC 2.A.18.2) subfamily.

Its subcellular location is the cell membrane. Amino acid transporter. The polypeptide is Lysine histidine transporter-like 4 (Arabidopsis thaliana (Mouse-ear cress)).